The chain runs to 145 residues: Oleosin L (145 aa).

Position 2 is an N-acetylalanine (A2). Helical transmembrane passes span 36-56 and 59-79; these read GSLL…LTIA and LLVI…LLGA. A Proline-knot motif is present at residues 58–69; sequence PLLVIFSPVLVP. Residues 123 to 132 are compositionally biased toward basic and acidic residues; the sequence is KAREMKDRAE. The tract at residues 123 to 145 is disordered; the sequence is KAREMKDRAEQFSQQPVAGSQTS. Positions 133-145 are enriched in polar residues; that stretch reads QFSQQPVAGSQTS.

This sequence belongs to the oleosin family. As to expression, expressed in seeds (at protein level).

The protein resides in the lipid droplet. It localises to the membrane. Functionally, may have a structural role to stabilize the lipid body during desiccation of the seed by preventing coalescence of the oil. Probably interacts with both lipid and phospholipid moieties of lipid bodies. May also provide recognition signals for specific lipase anchorage in lipolysis during seedling growth. In Sesamum indicum (Oriental sesame), this protein is Oleosin L.